The sequence spans 646 residues: Lipoteichoic acid synthase (646 aa).

The Cytoplasmic segment spans residues 1 to 7 (MSSQKKK). The chain crosses the membrane as a helical span at residues 8 to 28 (ISLFAFFLLTVITITLKTYFS). The Extracellular segment spans residues 29–43 (YYVDFSLGVKGLVQN). The chain crosses the membrane as a helical span at residues 44-64 (LILLMNPYSLVALVLSVFLFF). Residues 65-68 (KGKK) are Cytoplasmic-facing. Residues 69–89 (AFWFMFIGGFLLTFLLYANVV) form a helical membrane-spanning segment. The Extracellular segment spans residues 90–119 (YFRFFSDFLTFSTLNQVGNVESMGGAVSAS). A helical membrane pass occupies residues 120–140 (FKWYDFVYFIDTLVYLFILIF). Residues 141–153 (KTKWLDTKAFSKK) lie on the Cytoplasmic side of the membrane. Residues 154 to 174 (FVPVVMAASVALFFLNLAFAE) form a helical membrane-spanning segment. Topologically, residues 175 to 646 (TDRPELLTRT…ETGPKANSKK (472 aa)) are extracellular. The Mn(2+) site is built by Glu-255 and Thr-300. The active site involves Thr-300. His-416 provides a ligand contact to substrate. Residues Asp-475 and His-476 each contribute to the Mn(2+) site. Residues 623–638 (NPDFKKVNPSKYKYET) are compositionally biased toward basic and acidic residues. The tract at residues 623 to 646 (NPDFKKVNPSKYKYETGPKANSKK) is disordered.

This sequence belongs to the LTA synthase family. Post-translationally, proteolytically cleaved.

It localises to the cell membrane. The protein localises to the secreted. It functions in the pathway cell wall biogenesis; lipoteichoic acid biosynthesis. Functionally, catalyzes the polymerization of lipoteichoic acid (LTA) polyglycerol phosphate, a reaction that presumably uses phosphatidylglycerol (PG) as substrate. Is required for staphylococcal growth and cell division process. This is Lipoteichoic acid synthase (ltaS) from Staphylococcus aureus (strain bovine RF122 / ET3-1).